Reading from the N-terminus, the 336-residue chain is Dihydroorotate dehydrogenase (quinone) (336 aa).

FMN contacts are provided by residues 62–66 (AGLDK) and Thr86. Lys66 lines the substrate pocket. A substrate-binding site is contributed by 111-115 (NRMGF). Asn139 and Asn172 together coordinate FMN. Asn172 contributes to the substrate binding site. Ser175 (nucleophile) is an active-site residue. Asn177 serves as a coordination point for substrate. The FMN site is built by Lys217 and Thr245. 246 to 247 (NT) is a binding site for substrate. Residues Gly268, Gly297, and 318–319 (YS) contribute to the FMN site.

This sequence belongs to the dihydroorotate dehydrogenase family. Type 2 subfamily. As to quaternary structure, monomer. It depends on FMN as a cofactor.

The protein localises to the cell membrane. The enzyme catalyses (S)-dihydroorotate + a quinone = orotate + a quinol. The protein operates within pyrimidine metabolism; UMP biosynthesis via de novo pathway; orotate from (S)-dihydroorotate (quinone route): step 1/1. Functionally, catalyzes the conversion of dihydroorotate to orotate with quinone as electron acceptor. In Shigella dysenteriae serotype 1 (strain Sd197), this protein is Dihydroorotate dehydrogenase (quinone).